Here is a 313-residue protein sequence, read N- to C-terminus: Carbamate kinase 2 (313 aa).

The protein belongs to the carbamate kinase family.

The protein localises to the cytoplasm. It catalyses the reaction hydrogencarbonate + NH4(+) + ATP = carbamoyl phosphate + ADP + H2O + H(+). It participates in metabolic intermediate metabolism; carbamoyl phosphate degradation; CO(2) and NH(3) from carbamoyl phosphate: step 1/1. This is Carbamate kinase 2 (arcC2) from Staphylococcus aureus (strain bovine RF122 / ET3-1).